The sequence spans 358 residues: Biotin synthase (358 aa).

One can recognise a Radical SAM core domain in the interval 47–306; the sequence is KNNSKIKLCA…ALYKIIMPYA (260 aa). 3 residues coordinate [4Fe-4S] cluster: Cys-65, Cys-69, and Cys-72. Positions 142, 174, 233, and 309 each coordinate [2Fe-2S] cluster.

It belongs to the radical SAM superfamily. Biotin synthase family. In terms of assembly, homodimer. Requires [4Fe-4S] cluster as cofactor. The cofactor is [2Fe-2S] cluster.

The enzyme catalyses (4R,5S)-dethiobiotin + (sulfur carrier)-SH + 2 reduced [2Fe-2S]-[ferredoxin] + 2 S-adenosyl-L-methionine = (sulfur carrier)-H + biotin + 2 5'-deoxyadenosine + 2 L-methionine + 2 oxidized [2Fe-2S]-[ferredoxin]. The protein operates within cofactor biosynthesis; biotin biosynthesis; biotin from 7,8-diaminononanoate: step 2/2. In terms of biological role, catalyzes the conversion of dethiobiotin (DTB) to biotin by the insertion of a sulfur atom into dethiobiotin via a radical-based mechanism. The polypeptide is Biotin synthase (Methanocaldococcus jannaschii (strain ATCC 43067 / DSM 2661 / JAL-1 / JCM 10045 / NBRC 100440) (Methanococcus jannaschii)).